A 192-amino-acid polypeptide reads, in one-letter code: Guanylate kinase (192 aa).

One can recognise a Guanylate kinase-like domain in the interval 7-185 (GLIIILSSPS…TLKKIHEIIV (179 aa)). ATP is bound at residue 14–21 (SPSGTGKS).

This sequence belongs to the guanylate kinase family.

Its subcellular location is the cytoplasm. It carries out the reaction GMP + ATP = GDP + ADP. Functionally, essential for recycling GMP and indirectly, cGMP. The polypeptide is Guanylate kinase (Rickettsia felis (strain ATCC VR-1525 / URRWXCal2) (Rickettsia azadi)).